The chain runs to 290 residues: MWKDLFVKKKKYAPLPSEQARHEVPEGVMTKCPQCKKIMYTKELIKNLRVCLSCGYHHPMPARERIASLLDDGSFREYDADMISVNPLGFPGYIEKLEEDRRKSGLNEAVVTGEGALDGHPLVIAVMDSSFRMGSMGSVVGEKITRAVERAREQQMPFLIFTASGGARMQEGVLSLMQMAKTSAALKRFSNDGGLFISVMTHPTTGGVSASFASLGDYNFAEPGALIGFAGRRVIEQTVREELPDDFQTAEFLLKHGQLDAVIHRHELKETLAVVLDLHQKGGEEGWWRN.

Positions 28–290 constitute a CoA carboxyltransferase N-terminal domain; it reads VMTKCPQCKK…KGGEEGWWRN (263 aa). The Zn(2+) site is built by cysteine 32, cysteine 35, cysteine 51, and cysteine 54. The C4-type zinc finger occupies 32–54; that stretch reads CPQCKKIMYTKELIKNLRVCLSC.

Belongs to the AccD/PCCB family. As to quaternary structure, acetyl-CoA carboxylase is a heterohexamer composed of biotin carboxyl carrier protein (AccB), biotin carboxylase (AccC) and two subunits each of ACCase subunit alpha (AccA) and ACCase subunit beta (AccD). Zn(2+) serves as cofactor.

Its subcellular location is the cytoplasm. It carries out the reaction N(6)-carboxybiotinyl-L-lysyl-[protein] + acetyl-CoA = N(6)-biotinyl-L-lysyl-[protein] + malonyl-CoA. Its pathway is lipid metabolism; malonyl-CoA biosynthesis; malonyl-CoA from acetyl-CoA: step 1/1. Its function is as follows. Component of the acetyl coenzyme A carboxylase (ACC) complex. Biotin carboxylase (BC) catalyzes the carboxylation of biotin on its carrier protein (BCCP) and then the CO(2) group is transferred by the transcarboxylase to acetyl-CoA to form malonyl-CoA. The chain is Acetyl-coenzyme A carboxylase carboxyl transferase subunit beta from Geobacillus kaustophilus (strain HTA426).